A 28-amino-acid polypeptide reads, in one-letter code: leu operon leader peptide (28 aa).

In terms of biological role, involved in control of the biosynthesis of leucine. This Salmonella typhimurium (strain LT2 / SGSC1412 / ATCC 700720) protein is leu operon leader peptide (leuL).